Here is a 398-residue protein sequence, read N- to C-terminus: Phosphoglycerate kinase (398 aa).

Residues 23 to 25, Arg-38, 61 to 64, Arg-119, and Arg-152 contribute to the substrate site; these read DLN and HFGR. Residues Lys-202, Glu-324, and 354 to 357 each bind ATP; that span reads GGDT.

It belongs to the phosphoglycerate kinase family. Monomer.

It is found in the cytoplasm. The enzyme catalyses (2R)-3-phosphoglycerate + ATP = (2R)-3-phospho-glyceroyl phosphate + ADP. The protein operates within carbohydrate degradation; glycolysis; pyruvate from D-glyceraldehyde 3-phosphate: step 2/5. This is Phosphoglycerate kinase from Rhodopseudomonas palustris (strain ATCC BAA-98 / CGA009).